The primary structure comprises 73 residues: Mating-type pheromone BBP1(3) (73 aa).

The segment at 1-41 (MASSVLARPGPSTVLPAMTRPPPPMAHRAAATPSFARSSQP) is disordered. A Cysteine methyl ester modification is found at cysteine 70. Cysteine 70 carries the S-farnesyl cysteine lipid modification. Residues 71–73 (VVA) constitute a propeptide, removed in mature form.

It localises to the cell membrane. In terms of biological role, activates B-regulated development. In Schizophyllum commune (Split gill fungus), this protein is Mating-type pheromone BBP1(3) (BBP1(3)).